The primary structure comprises 213 residues: LexA repressor (213 aa).

Positions 27-47 (QTEIARAFGFKGVRAAQYHLE) form a DNA-binding region, H-T-H motif. Residues Ser133 and Lys170 each act as for autocatalytic cleavage activity in the active site.

The protein belongs to the peptidase S24 family. In terms of assembly, homodimer.

It catalyses the reaction Hydrolysis of Ala-|-Gly bond in repressor LexA.. Represses a number of genes involved in the response to DNA damage (SOS response), including recA and lexA. In the presence of single-stranded DNA, RecA interacts with LexA causing an autocatalytic cleavage which disrupts the DNA-binding part of LexA, leading to derepression of the SOS regulon and eventually DNA repair. In Xanthomonas campestris, this protein is LexA repressor.